Here is a 1744-residue protein sequence, read N- to C-terminus: MSGIAFVEVRTRAGQEDRSAPWRPVVRNGENHATFYDTRMGNFDANPFPPQTCQTCAASLTGKYGNERCHGHFGFVGMPRIRPGSAHSDSDRLVVLNPHLAMDADRLFRAKCFFCHKFRAPTFDVERFRQALVLADHGLPGDALHLLDTVPTAKGHDAMLNHRRMANEEIVNDVSILQSYVDRILRQRASGCSEEDAKARVTMAQKGTVDVRNDICNMAISHLRSFSGPCSHCTAISPTFLKRGGIIFFLFRKSNLVTNIAKGFLTQQEVSEWEAVNRLHGRTGTYFDGRQMLFHMKNLFAKEQAILGLLYPNLGEPSVFTKTNKVVPASERYKLFFLDRILVPPLPLRLSSGVRVNDNGLIIPDEQTRALSDILGFVEQIECFHTLSANSTNGRSFITDAQRAVNESNLRNLQQKVDEFYAEIVNSFAKKEGLFRMNMMGKRVNQACRSVISPDPFVEPNEVLLPRPLARALSFPEQVTCFAPARMNLLKHCVVNGPRKYPGATHIELRHANGEIRSVDLNVPEQTRRQHAARFFAMAQSGVTLIVYRHILNGDRVIFNRQPTLHKPSMMGYRVKVLSGSKTIRFHYVNGNSFNADFDGDEMNVHVPQSIETRAEVETLMDANINYLVPTSGRPIRGLIQDHVAAGVLVTLRDKFFDHSTFVQLVYNGVGPYIQENVGITLAELIPIPAILMPRPMWTGKQLISVMVRFSSGLSAASDCGREIEGGITLKGTSQIQPSAFDRIPAGSCDAVRAKSGAVVDSTVMFANSELITGFMCKKQLGASNMSAPHHVYELYGPHRTGQLFAAFGRVLLLALRKEGLSLAMDDMFLVDEERRCDLLRKLDDIALDVPDEEATAAPMIADYATKIQQEFVPQRMLVPFPKNHLLLMTISGAKGSNLNATQMSLQLGQQLFDGLRVKRMNSSKTLPSFFTNEKRARSFGFAMGSFASGIRPAEYTIHAMAGRDGLIDTAVKTSRSGHLQRCLIKGLESLVVHWDRTVRDSNGSVIQFMYGGDGLDPCKASTLTAWEMMKDNVVDVSKRFGGDASESVAGAEDGAAAGLKEMRNEDGKPTTEAVQNAHMEQQLSTYPLPASLDKSLSEYLCKKADFPLFRKVSTLARWDAKQQLKERLQQRRQKWVGAFEKTLADITARRRLWALCEPGEPVGLLAAQAAGEPSTQMTLNTFHTAGSTVSHVTEGIPRLRELLIYASVNKAAVVVPVTNATEEDEKVIAKMLRAGVAAKLTDCLAKVTDGAGGQSASSSMQRNLNTGFGKGYHYHVARGRTGMVITVSFLFSRSCLEELRKRMCMSPSEHRQSFTEALKNVVRLIMRSLSAVPREKESGDGSGNTGGMKGGSGRADRKRKRSGPDDGGGPLGGTFGDEIMRIEEGTDSDDGMSERSSIGGGRAGSEVSSLHSDGTDTRGIAGSDTGGPQRRRGSVESGRGDDASDSEAADPDLYARRSGSPARDAEDGGEMQDRDGTDWGGTSMQGVVGYDNFPEIHMSFTKSNFGAVIAPLSTAAAARDGVVQLHEDFFIVNAVLRTASDVIAVIPDVVDNALEAQRMPSWLPQFGSLTFTRLKDKGSGQLVFQGPGSTMRNVMSFLSLFTVGIKSIKLHQACSTDIRDMGTYFGIESGYAALYDELNKLFNRYNVDPRHLSLIADTSTHRGRWENFNFTGVISTSASPLFQMTFASSKRWLHRAVSRGMSDDLESFSSAIMVGERPRVGTASVRLSTDTAILRDVLERNFA.

Cys-56, Cys-69, and His-72 together coordinate Zn(2+). 3 residues coordinate Mg(2+): Asp-597, Asp-599, and Asp-601. The bridging helix stretch occupies residues 953 to 965 (PAEYTIHAMAGRD). The disordered stretch occupies residues 1333-1484 (VPREKESGDG…RDGTDWGGTS (152 aa)). 2 stretches are compositionally biased toward gly residues: residues 1341-1354 (DGSG…GGSG) and 1366-1376 (DDGGGPLGGTF). The span at 1464–1478 (RDAEDGGEMQDRDGT) shows a compositional bias: basic and acidic residues.

This sequence belongs to the RNA polymerase beta' chain family. As to quaternary structure, component of the RNA polymerase I (Pol I) complex consisting of at least 13 subunits. In terms of processing, phosphorylated.

It localises to the nucleus. It is found in the nucleolus. The catalysed reaction is RNA(n) + a ribonucleoside 5'-triphosphate = RNA(n+1) + diphosphate. DNA-dependent RNA polymerase catalyzes the transcription of DNA into RNA using the four ribonucleoside triphosphates as substrates. Largest and catalytic core component of RNA polymerase I which synthesizes ribosomal RNA precursors. Forms the polymerase active center together with the second largest subunit. A single stranded DNA template strand of the promoter is positioned within the central active site cleft of Pol I. A bridging helix emanates from RPA1 and crosses the cleft near the catalytic site and is thought to promote translocation of Pol I by acting as a ratchet that moves the RNA-DNA hybrid through the active site by switching from straight to bent conformations at each step of nucleotide addition. This is DNA-directed RNA polymerase I subunit RPA1 (TRP11) from Trypanosoma brucei brucei.